Reading from the N-terminus, the 35-residue chain is Thionin NsW1 (35 aa).

3 disulfides stabilise this stretch: Cys4-Cys32, Cys12-Cys30, and Cys16-Cys26.

In terms of processing, contains 4 disulfide bonds.

The protein localises to the secreted. Antimicrobial peptide disrupting membranes. Has antibacterial against Gram-positive bacteria S.aureus (MIC=6.5 uM) and B.subtilis (MIC=3.25 uM) but not against Gram-negative bacterium E.coli. Has antifungal activity against C.albicans (MIC=1.63 uM). This Nigella sativa (Black cumin) protein is Thionin NsW1.